The following is a 138-amino-acid chain: Molluscan insulin-related peptide 5 (138 aa).

An N-terminal signal peptide occupies residues 1-31 (MAGVRLVFTKAFMVTVLLTLLLNIGVKPAEG). At Gln32 the chain carries Pyrrolidone carboxylic acid. Cystine bridges form between Cys48-Cys124, Cys60-Cys137, and Cys123-Cys128. A propeptide spans 72-84 (DAETGWLLPETMV) (C-beta peptide like). Residues 87 to 111 (NAQTDLDDPLRNIKLSSESALTYLT) constitute a propeptide, C-alpha peptide like. At Gln114 the chain carries Pyrrolidone carboxylic acid.

This sequence belongs to the insulin family. In terms of assembly, heterodimer of a B chain and an A chain linked by two disulfide bonds. In terms of tissue distribution, expressed in the cerebral light-green cells which are giant neuroendocrines cells involved in the control of growth.

The protein localises to the cytoplasmic vesicle. It is found in the secretory vesicle. In Lymnaea stagnalis (Great pond snail), this protein is Molluscan insulin-related peptide 5.